Here is a 90-residue protein sequence, read N- to C-terminus: Evasin P1128 (90 aa).

An N-terminal signal peptide occupies residues 1–18; that stretch reads MFIALGIQLFVAVTYAAG. 3 disulfides stabilise this stretch: C29–C51, C33–C53, and C44–C64. An N-linked (GlcNAc...) asparagine glycan is attached at N32.

It is found in the secreted. Its function is as follows. Salivary chemokine-binding protein which binds to host chemokines CXCL1, CXCL2, CXCL3, CXCL5 and CXCL8. The chain is Evasin P1128 from Ixodes ricinus (Common tick).